Here is a 393-residue protein sequence, read N- to C-terminus: Tryptophan synthase beta chain (393 aa).

The residue at position 86 (Lys86) is an N6-(pyridoxal phosphate)lysine.

It belongs to the TrpB family. As to quaternary structure, tetramer of two alpha and two beta chains. It depends on pyridoxal 5'-phosphate as a cofactor.

It catalyses the reaction (1S,2R)-1-C-(indol-3-yl)glycerol 3-phosphate + L-serine = D-glyceraldehyde 3-phosphate + L-tryptophan + H2O. The protein operates within amino-acid biosynthesis; L-tryptophan biosynthesis; L-tryptophan from chorismate: step 5/5. Functionally, the beta subunit is responsible for the synthesis of L-tryptophan from indole and L-serine. This is Tryptophan synthase beta chain from Alteromonas mediterranea (strain DSM 17117 / CIP 110805 / LMG 28347 / Deep ecotype).